Reading from the N-terminus, the 409-residue chain is Phosphatidylserine decarboxylase proenzyme, mitochondrial (409 aa).

The N-terminal 52 residues, 1–52, are a transit peptide targeting the mitochondrion; that stretch reads MATSVGHRCLGLLHGVAPWRSSLHPCEITALSQSLQPLRKLPFRAFRTDARK. The necessary for localization to both lipid droplets and mitochondria stretch occupies residues 36 to 103; the sequence is QPLRKLPFRA…LGLEIPPKLA (68 aa). Over 53–63 the chain is Mitochondrial matrix; that stretch reads IHTAPARTMFL. Residues 64 to 82 form a helical membrane-spanning segment; the sequence is LRPLPILLVTGGGYAGYRQ. Topologically, residues 83–409 are mitochondrial intermembrane; the sequence is YEKYRERELE…IRFGEALGSL (327 aa). Catalysis depends on charge relay system; for autoendoproteolytic cleavage activity residues Asp-191, His-267, and Ser-378. Ser-378 acts as the Schiff-base intermediate with substrate; via pyruvic acid; for decarboxylase activity in catalysis. Ser-378 is modified (pyruvic acid (Ser); by autocatalysis).

The protein belongs to the phosphatidylserine decarboxylase family. PSD-B subfamily. Eukaryotic type I sub-subfamily. As to quaternary structure, heterodimer of a large membrane-associated beta subunit and a small pyruvoyl-containing alpha subunit. It depends on pyruvate as a cofactor. Post-translationally, is synthesized initially as an inactive proenzyme. Formation of the active enzyme involves a self-maturation process in which the active site pyruvoyl group is generated from an internal serine residue via an autocatalytic post-translational modification. Two non-identical subunits are generated from the proenzyme in this reaction, and the pyruvate is formed at the N-terminus of the alpha chain, which is derived from the carboxyl end of the proenzyme. The autoendoproteolytic cleavage occurs by a canonical serine protease mechanism, in which the side chain hydroxyl group of the serine supplies its oxygen atom to form the C-terminus of the beta chain, while the remainder of the serine residue undergoes an oxidative deamination to produce ammonia and the pyruvoyl prosthetic group on the alpha chain. During this reaction, the Ser that is part of the protease active site of the proenzyme becomes the pyruvoyl prosthetic group, which constitutes an essential element of the active site of the mature decarboxylase.

It is found in the mitochondrion inner membrane. Its subcellular location is the cytoplasm. It localises to the lipid droplet. It catalyses the reaction a 1,2-diacyl-sn-glycero-3-phospho-L-serine + H(+) = a 1,2-diacyl-sn-glycero-3-phosphoethanolamine + CO2. The protein operates within phospholipid metabolism; phosphatidylethanolamine biosynthesis. Catalyzes the formation of phosphatidylethanolamine (PtdEtn) from phosphatidylserine (PtdSer). Plays a central role in phospholipid metabolism and in the interorganelle trafficking of phosphatidylserine. May be involved in lipid droplet biogenesis at the endoplasmic reticulum membrane. This Homo sapiens (Human) protein is Phosphatidylserine decarboxylase proenzyme, mitochondrial.